The primary structure comprises 344 residues: MKFLDEAKVYVRSGDGGPGCVSFRREKFIEFGGPNGGDGGRGGDVWIECVQGLNTLIDYRYRQHFKAKKGEHGMGSNCHGAKGDDAVLQVPAGTQVFAEDGETLIADMTEVGQRVRLAKGGNGGFGNAYFTTSTNRAPRHANPGLEGQEMWLILRLKLIADAGLVGLPNAGKSTFLATVTAAKPKIADYPFTTLHPGLGVVRSDEREFVLADIPGLIEGAHEGVGLGDRFLAHVERCRVLLHLVEGTSEHAGKAYKLVRRELEAYGEGLSDKPEIVALSKADALDADTLKQQLARLKRAAGGKPLVLSAASGQGVQEALRAIQAQLDTQGAEEAEAQPAEPWQP.

Residues 1–159 (MKFLDEAKVY…MWLILRLKLI (159 aa)) form the Obg domain. Residues 160 to 327 (ADAGLVGLPN…ALRAIQAQLD (168 aa)) enclose the OBG-type G domain. GTP contacts are provided by residues 166-173 (GLPNAGKS), 191-195 (FTTLH), 212-215 (DIPG), 279-282 (SKAD), and 308-310 (SAA). Residues serine 173 and threonine 193 each coordinate Mg(2+).

This sequence belongs to the TRAFAC class OBG-HflX-like GTPase superfamily. OBG GTPase family. As to quaternary structure, monomer. Mg(2+) serves as cofactor.

The protein localises to the cytoplasm. An essential GTPase which binds GTP, GDP and possibly (p)ppGpp with moderate affinity, with high nucleotide exchange rates and a fairly low GTP hydrolysis rate. Plays a role in control of the cell cycle, stress response, ribosome biogenesis and in those bacteria that undergo differentiation, in morphogenesis control. The sequence is that of GTPase Obg from Methylorubrum extorquens (strain CM4 / NCIMB 13688) (Methylobacterium extorquens).